The chain runs to 399 residues: S-adenosylmethionine synthase (399 aa).

H15 contacts ATP. D17 contacts Mg(2+). Residue E43 coordinates K(+). 2 residues coordinate L-methionine: E56 and Q99. A flexible loop region spans residues 99–109 (QSPDIARGVNR). Residues 166–168 (DAK), 232–233 (RF), D241, 247–248 (RK), A264, and K268 contribute to the ATP site. D241 contributes to the L-methionine binding site. Residue K272 participates in L-methionine binding.

Belongs to the AdoMet synthase family. In terms of assembly, homotetramer; dimer of dimers. It depends on Mg(2+) as a cofactor. K(+) serves as cofactor.

Its subcellular location is the cytoplasm. It carries out the reaction L-methionine + ATP + H2O = S-adenosyl-L-methionine + phosphate + diphosphate. The protein operates within amino-acid biosynthesis; S-adenosyl-L-methionine biosynthesis; S-adenosyl-L-methionine from L-methionine: step 1/1. Functionally, catalyzes the formation of S-adenosylmethionine (AdoMet) from methionine and ATP. The overall synthetic reaction is composed of two sequential steps, AdoMet formation and the subsequent tripolyphosphate hydrolysis which occurs prior to release of AdoMet from the enzyme. In Nitrosospira multiformis (strain ATCC 25196 / NCIMB 11849 / C 71), this protein is S-adenosylmethionine synthase.